The following is a 391-amino-acid chain: Na(+)/H(+) antiporter NhaA (391 aa).

11 consecutive transmembrane segments (helical) span residues 14 to 34, 59 to 79, 95 to 115, 124 to 144, 154 to 174, 177 to 197, 213 to 233, 261 to 281, 292 to 312, 331 to 351, and 363 to 383; these read AGGI…NSPL, LIHW…GLEV, SLPT…YLIF, VGWA…MALL, VFLL…IALF, TDLS…LIGL, LILW…GVII, FIIL…GMSL, IALG…YIAV, VAVM…LAFV, and LGIL…LSKV.

This sequence belongs to the NhaA Na(+)/H(+) (TC 2.A.33) antiporter family.

Its subcellular location is the cell inner membrane. The enzyme catalyses Na(+)(in) + 2 H(+)(out) = Na(+)(out) + 2 H(+)(in). Functionally, na(+)/H(+) antiporter that extrudes sodium in exchange for external protons. The sequence is that of Na(+)/H(+) antiporter NhaA from Shewanella pealeana (strain ATCC 700345 / ANG-SQ1).